The primary structure comprises 124 residues: Salivary protein 15 Iric-3 (124 aa).

The first 22 residues, 1 to 22 (MESFVAMKVVCIILLFVIAAEA), serve as a signal peptide directing secretion. Residues asparagine 82 and asparagine 93 are each glycosylated (N-linked (GlcNAc...) asparagine). The CD4-binding stretch occupies residues 105-124 (GPNNQTCHKKDECVGYIPGC).

It belongs to the salp15 family. As to quaternary structure, interacts with host CD4. Interacts with host DC-SIGN (CD209). Interacts with Borrelia outer surface protein C (OspC). In terms of tissue distribution, expressed in salivary glands. Detected in fed adult female.

Its subcellular location is the secreted. Salivary tick protein that downregulates host immune system by binding to both dendritic cells, and CD4(+) T cells. Specifically binds to the CD4 coreceptor on T cells. This interaction prevents the activation of the Src kinase, Lck, and its downstream substrate Zap-70, and results in deficient activation of PLCgamma1, the repression of calcium fluxes triggered by T-cell antigen receptor (TCR) ligation, and a subsequent reduction in interleukin-2 production. This salivary protein also binds to DC-SIGN (CD209) on dendritic cells (DC) and activates the Raf-1 kinase/MEK signaling pathway that results in down-regulating expression of pro-inflammatory cytokines. Furthermore, it inhibits T cell proliferation induced by DCs. In addition, it inhibits in vitro keratinocyte inflammation induced by Borrelia burgdorferi or by the major outer surface protein (OspC) of Borrelia. In addition, it downregulates chemokines and monocyte chemoattractant protein 1, as well as several antimicrobial peptides such as defensins, cathelicidin, psoriasin, and RNase 7. Apart from its immunomodulatory activities, it is also associated with protection of Borrelia spirochetes from antibody-mediated killing through its binding to OspC. In vivo, tests on different immune disease animal models show promising therapeutic results, e.g., in inhibiting HIV infection, experimental autoimmune encephalomyelitis, transplantation rejection, and asthma. The chain is Salivary protein 15 Iric-3 from Ixodes ricinus (Common tick).